A 235-amino-acid polypeptide reads, in one-letter code: MKHQTIDQLKKLTGHSFKNEDLLKKALTHSSVQRSEQGNYERLEFLGDRVLGLLVAEMLYQFFPQASEGELSVRLNGLVNAQTCADIAREIGLPDMVHVGCEMKNLEGRRLANMHADVVEALIAVIYLDGGLKSVRPFIQRYWQDRAKKIDASRRDAKTELQEWAHTQNGVQPQYRVIKRCGLDHDPVFVVEVSVPGFVSEVGEGGSKRHAERAAAEKILRREGMWGSIEKDDHG.

Residues 6–131 enclose the RNase III domain; the sequence is IDQLKKLTGH…LIAVIYLDGG (126 aa). Glu44 is a binding site for Mg(2+). Asp48 is an active-site residue. Asp117 and Glu120 together coordinate Mg(2+). Residue Glu120 is part of the active site. The region spanning 156–225 is the DRBM domain; that stretch reads DAKTELQEWA…AEKILRREGM (70 aa).

It belongs to the ribonuclease III family. Homodimer. Mg(2+) is required as a cofactor.

The protein resides in the cytoplasm. The catalysed reaction is Endonucleolytic cleavage to 5'-phosphomonoester.. In terms of biological role, digests double-stranded RNA. Involved in the processing of primary rRNA transcript to yield the immediate precursors to the large and small rRNAs (23S and 16S). Processes some mRNAs, and tRNAs when they are encoded in the rRNA operon. Processes pre-crRNA and tracrRNA of type II CRISPR loci if present in the organism. The chain is Ribonuclease 3 from Bartonella bacilliformis (strain ATCC 35685 / KC583 / Herrer 020/F12,63).